Reading from the N-terminus, the 738-residue chain is LPS-assembly protein LptD (738 aa).

The first 26 residues, M1–A26, serve as a signal peptide directing secretion.

This sequence belongs to the LptD family. As to quaternary structure, component of the lipopolysaccharide transport and assembly complex. Interacts with LptE and LptA.

It is found in the cell outer membrane. Functionally, together with LptE, is involved in the assembly of lipopolysaccharide (LPS) at the surface of the outer membrane. The polypeptide is LPS-assembly protein LptD (Nitrosococcus oceani (strain ATCC 19707 / BCRC 17464 / JCM 30415 / NCIMB 11848 / C-107)).